The primary structure comprises 301 residues: Protease HtpX (301 aa).

2 consecutive transmembrane segments (helical) span residues 4-24 (IGLFLLTNLAVLVVAGIILSL) and 38-58 (LGNLLVICFVFGMVGSLVSLF). H147 contributes to the Zn(2+) binding site. E148 is a catalytic residue. H151 is a Zn(2+) binding site. A run of 2 helical transmembrane segments spans residues 155-175 (GDMVTLALIQGVVNAFVMFFA) and 200-220 (FIITMVLDIVFGILASAIVMW). E226 contributes to the Zn(2+) binding site.

This sequence belongs to the peptidase M48B family. Zn(2+) serves as cofactor.

The protein localises to the cell inner membrane. The chain is Protease HtpX from Acinetobacter baumannii (strain AB307-0294).